The sequence spans 76 residues: MEGLNLVATALAVGLGAIGPGVGIGIIVSGAVQAIGRNPEIENRVVTYMFIGIAFTEALAIFGLVIAFLIGFGVLQ.

2 helical membrane-spanning segments follow: residues 7–27 (VATA…IGII) and 50–70 (FIGI…AFLI).

This sequence belongs to the ATPase C chain family. F-type ATPases have 2 components, F(1) - the catalytic core - and F(0) - the membrane proton channel. F(1) has five subunits: alpha(3), beta(3), gamma(1), delta(1), epsilon(1). F(0) has four main subunits: a(1), b(1), b'(1) and c(10-14). The alpha and beta chains form an alternating ring which encloses part of the gamma chain. F(1) is attached to F(0) by a central stalk formed by the gamma and epsilon chains, while a peripheral stalk is formed by the delta, b and b' chains.

It localises to the cell membrane. F(1)F(0) ATP synthase produces ATP from ADP in the presence of a proton or sodium gradient. F-type ATPases consist of two structural domains, F(1) containing the extramembraneous catalytic core and F(0) containing the membrane proton channel, linked together by a central stalk and a peripheral stalk. During catalysis, ATP synthesis in the catalytic domain of F(1) is coupled via a rotary mechanism of the central stalk subunits to proton translocation. Functionally, key component of the F(0) channel; it plays a direct role in translocation across the membrane. A homomeric c-ring of between 10-14 subunits forms the central stalk rotor element with the F(1) delta and epsilon subunits. This Chloroflexus aurantiacus (strain ATCC 29366 / DSM 635 / J-10-fl) protein is ATP synthase subunit c.